A 311-amino-acid polypeptide reads, in one-letter code: Urease accessory protein UreD (311 aa).

This sequence belongs to the UreD family. As to quaternary structure, ureD, UreF and UreG form a complex that acts as a GTP-hydrolysis-dependent molecular chaperone, activating the urease apoprotein by helping to assemble the nickel containing metallocenter of UreC. The UreE protein probably delivers the nickel.

Its subcellular location is the cytoplasm. Required for maturation of urease via the functional incorporation of the urease nickel metallocenter. In Synechococcus sp. (strain CC9902), this protein is Urease accessory protein UreD.